The primary structure comprises 203 residues: RNA pyrophosphohydrolase (203 aa).

One can recognise a Nudix hydrolase domain in the interval 6 to 149 (GFRPNVGIIL…KRNVYQMALT (144 aa)). The Nudix box signature appears at 38–59 (GGIKHGESPEQAMFRELHEEVG). The segment at 170-203 (RAHRRDEGSEHNDHLDPTGPHDAGASVSEPKQAE) is disordered. Residues 173–185 (RRDEGSEHNDHLD) show a composition bias toward basic and acidic residues.

This sequence belongs to the Nudix hydrolase family. RppH subfamily. It depends on a divalent metal cation as a cofactor.

Its function is as follows. Accelerates the degradation of transcripts by removing pyrophosphate from the 5'-end of triphosphorylated RNA, leading to a more labile monophosphorylated state that can stimulate subsequent ribonuclease cleavage. The polypeptide is RNA pyrophosphohydrolase (Leptothrix cholodnii (strain ATCC 51168 / LMG 8142 / SP-6) (Leptothrix discophora (strain SP-6))).